A 91-amino-acid polypeptide reads, in one-letter code: Protein RacC (91 aa).

The chain is Protein RacC (racC) from Escherichia coli (strain K12).